The sequence spans 96 residues: Uteroglobin (96 aa).

Positions 1–21 (MKIAITMAVVMLSVCCSSASS) are cleaved as a signal peptide.

Belongs to the secretoglobin family. In terms of assembly, antiparallel homodimer; disulfide-linked. Interaction with LMBR1L is controversial.

The protein localises to the secreted. Binds phosphatidylcholine, phosphatidylinositol, polychlorinated biphenyls (PCB) and weakly progesterone, potent inhibitor of phospholipase A2. The protein is Uteroglobin (SCGB1A1) of Mesocricetus auratus (Golden hamster).